Reading from the N-terminus, the 474-residue chain is Trehalose-6-phosphate synthase (474 aa).

Arg10 serves as a coordination point for D-glucose 6-phosphate. 22–23 is a UDP-alpha-D-glucose binding site; it reads GG. The D-glucose 6-phosphate site is built by Tyr77 and Asp131. Residues Arg263 and Lys268 each coordinate UDP-alpha-D-glucose. Arg301 provides a ligand contact to D-glucose 6-phosphate. UDP-alpha-D-glucose-binding positions include Phe340 and 366-370; that span reads LVAKE.

This sequence belongs to the glycosyltransferase 20 family. In terms of assembly, homotetramer.

The enzyme catalyses D-glucose 6-phosphate + UDP-alpha-D-glucose = alpha,alpha-trehalose 6-phosphate + UDP + H(+). The protein operates within glycan biosynthesis; trehalose biosynthesis. Functionally, probably involved in the osmoprotection via the biosynthesis of trehalose. Catalyzes the transfer of glucose from UDP-alpha-D-glucose (UDP-Glc) to D-glucose 6-phosphate (Glc-6-P) to form trehalose-6-phosphate. Acts with retention of the anomeric configuration of the UDP-sugar donor. The protein is Trehalose-6-phosphate synthase of Escherichia coli O157:H7.